Reading from the N-terminus, the 198-residue chain is tRNA (pseudouridine(54)-N(1))-methyltransferase (198 aa).

S-adenosyl-L-methionine-binding positions include Leu130, Gly153, Leu176 to Leu181, and Cys186.

Belongs to the methyltransferase superfamily. TrmY family. In terms of assembly, homodimer.

It is found in the cytoplasm. It carries out the reaction pseudouridine(54) in tRNA + S-adenosyl-L-methionine = N(1)-methylpseudouridine(54) in tRNA + S-adenosyl-L-homocysteine + H(+). Functionally, specifically catalyzes the N1-methylation of pseudouridine at position 54 (Psi54) in tRNAs. This Methanococcus maripaludis (strain C7 / ATCC BAA-1331) protein is tRNA (pseudouridine(54)-N(1))-methyltransferase.